The following is a 1104-amino-acid chain: SWI/SNF complex subunit SMARCC1 (1104 aa).

The interval 27-301 (LAVYRRKDGG…PVSFRQRIST (275 aa)) is marR-like, BRCT and chromo domains module. One can recognise a MarR-like domain in the interval 37-163 (PASKFWESPD…IEKTLVQNNC (127 aa)). The region spanning 167–210 (PNIYLIPDIDLKLANKLKDIIKRHQGTFTDEKSKASHHIYPYPS) is the BRCT; N-terminus domain. A Glycyl lysine isopeptide (Lys-Gly) (interchain with G-Cter in SUMO2) cross-link involves residue K178. A Chromo domain is found at 216–244 (EWLRPVMRRDKQVLVHWGFYPDSYDTWVH). One can recognise a BRCT; C-terminus domain in the interval 260–284 (KPWKVHVKWILDTDVFNEWMNEEDY). The interval 295-445 (FRQRISTKNE…PGEDNVTEQT (151 aa)) is disordered. The segment covering 301-317 (TKNEEPVRSPERRDRKA) has biased composition (basic and acidic residues). Phosphoserine occurs at positions 309, 327, and 329. Phosphothreonine is present on T334. An N6-acetyllysine mark is found at K344 and K345. S349 is subject to Phosphoserine. Residue K353 is modified to N6-acetyllysine. Position 356 is a phosphoserine (S356). K358 carries the post-translational modification N6-acetyllysine; alternate. Residue K358 forms a Glycyl lysine isopeptide (Lys-Gly) (interchain with G-Cter in SUMO2); alternate linkage. T397 is modified (phosphothreonine). The SWIRM domain maps to 448 to 545 (IIIPSYASWF…YQVDPESRPM (98 aa)). The residue at position 572 (S572) is a Phosphoserine. Residue K591 forms a Glycyl lysine isopeptide (Lys-Gly) (interchain with G-Cter in SUMO2) linkage. Residues 617–668 (SAGREWTEQETLLLLEALEMYKDDWNKVSEHVGSRTQDECILHFLRLPIEDP) form the SANT domain. K738 participates in a covalent cross-link: Glycyl lysine isopeptide (Lys-Gly) (interchain with G-Cter in SUMO2). A disordered region spans residues 744–859 (ARASGKVDPT…DAGKKKVEHE (116 aa)). S775 is subject to Phosphoserine. Residues 775-784 (SEEEKMETDP) show a composition bias toward acidic residues. Basic and acidic residues predominate over residues 788–859 (QPEKAENKVE…DAGKKKVEHE (72 aa)). K795 participates in a covalent cross-link: Glycyl lysine isopeptide (Lys-Gly) (interchain with G-Cter in SUMO2). Residues S821 and S824 each carry the phosphoserine modification. Residues K828 and K855 each participate in a glycyl lysine isopeptide (Lys-Gly) (interchain with G-Cter in SUMO2) cross-link. The stretch at 909 to 945 (KLRHFEELETIMDREKEALEQQRQQLLTERQNFHMEQ) forms a coiled coil. K947 bears the N6-acetyllysine mark. Disordered regions lie at residues 955–1021 (QQME…PGPG) and 1041–1104 (IHPT…SATP). Residues 956 to 973 (QMEQQQQHGQTPQQAHQH) are compositionally biased toward low complexity. Pro residues-rich tracts occupy residues 994 to 1017 (QQPPPYPLMHHQMPPPHPPQPGQI) and 1048 to 1057 (PTPPGMPPMP). Position 1064 is an asymmetric dimethylarginine (R1064). Positions 1073 to 1104 (MYPPPPQQQQPPPPADGVPPPPAPGPPASATP) are enriched in pro residues.

Belongs to the SMARCC family. As to quaternary structure, component of the multiprotein chromatin-remodeling complexes SWI/SNF: SWI/SNF-A (BAF), SWI/SNF-B (PBAF) and related complexes. The canonical complex contains a catalytic subunit (either SMARCA4/BRG1/BAF190A or SMARCA2/BRM/BAF190B) and at least SMARCE1, ACTL6A/BAF53, SMARCC1/BAF155, SMARCC2/BAF170, and SMARCB1/SNF5/BAF47. Other subunits specific to each of the complexes may also be present permitting several possible combinations developmentally and tissue specific. Component of the BAF complex, which includes at least actin (ACTB), ARID1A/BAF250A, ARID1B/BAF250B, SMARCA2/BRM, SMARCA4/BRG1, ACTL6A/BAF53, ACTL6B/BAF53B, SMARCE1/BAF57, SMARCC1/BAF155, SMARCC2/BAF170, SMARCB1/SNF5/INI1, and one or more SMARCD1/BAF60A, SMARCD2/BAF60B, or SMARCD3/BAF60C. In muscle cells, the BAF complex also contains DPF3. Component of neural progenitors-specific chromatin remodeling complex (npBAF complex) composed of at least, ARID1A/BAF250A or ARID1B/BAF250B, SMARCD1/BAF60A, SMARCD3/BAF60C, SMARCA2/BRM/BAF190B, SMARCA4/BRG1/BAF190A, SMARCB1/BAF47, SMARCC1/BAF155, SMARCE1/BAF57, SMARCC2/BAF170, PHF10/BAF45A, ACTL6A/BAF53A and actin. Component of neuron-specific chromatin remodeling complex (nBAF complex) composed of at least, ARID1A/BAF250A or ARID1B/BAF250B, SMARCD1/BAF60A, SMARCD3/BAF60C, SMARCA2/BRM/BAF190B, SMARCA4/BRG1/BAF190A, SMARCB1/BAF47, SMARCC1/BAF155, SMARCE1/BAF57, SMARCC2/BAF170, DPF1/BAF45B, DPF3/BAF45C, ACTL6B/BAF53B and actin. Component of the SWI/SNF-B (PBAF) chromatin remodeling complex, at least composed of SMARCA4/BRG1, SMARCB1/BAF47/SNF5, ACTL6A/BAF53A or ACTL6B/BAF53B, SMARCE1/BAF57, SMARCD1/BAF60A, SMARCD2/BAF60B, perhaps SMARCD3/BAF60C, SMARCC1/BAF155, SMARCC2/BAF170, PBRM1/BAF180, ARID2/BAF200 and actin. Component of SWI/SNF (GBAF) subcomplex, which includes at least BICRA or BICRAL (mutually exclusive), BRD9, SS18, SMARCA2/BRM, SMARCA4/BRG1/BAF190A, ACTL6A/BAF53, SMARCC1/BAF155, and SMARCD1/BAF60A. May also interact with the SIN3A histone deacetylase transcription repressor complex in conjunction with SMARCA2 and SMARCA4. The minimal complex composed of SMARCC1 and SMARCA4 seems to be able to associate with cyclin such as CCNE1 or transcription factors such as KLF1 or GATA1. Interacts with NR3C1 and SMARD1. Interacts with TRIP12; leading to disrupt interaction between TRIP12 and SMARCE1 and prevent SMARCE1 ubiquitination. Interacts with CEBPB (when not methylated). Interacts with KDM6B. Interacts with MKKS; the interaction takes place predominantly in the cytoplasm and may modulate SMARCC1 location. Interacts with DPF2. Interacts with PRDM1/BLIMP1. Interacts with DPF3a (isoform 2 of DPF3/BAF45C) and with HDGFL2 in a DPF3a-dependent manner. In terms of tissue distribution, highly expressed in adult brain, testis and thymus.

The protein localises to the nucleus. It is found in the cytoplasm. Functionally, involved in transcriptional activation and repression of select genes by chromatin remodeling (alteration of DNA-nucleosome topology). Component of SWI/SNF chromatin remodeling complexes that carry out key enzymatic activities, changing chromatin structure by altering DNA-histone contacts within a nucleosome in an ATP-dependent manner. May stimulate the ATPase activity of the catalytic subunit of the complex. Belongs to the neural progenitors-specific chromatin remodeling complex (npBAF complex) and the neuron-specific chromatin remodeling complex (nBAF complex). During neural development a switch from a stem/progenitor to a postmitotic chromatin remodeling mechanism occurs as neurons exit the cell cycle and become committed to their adult state. The transition from proliferating neural stem/progenitor cells to postmitotic neurons requires a switch in subunit composition of the npBAF and nBAF complexes. As neural progenitors exit mitosis and differentiate into neurons, npBAF complexes which contain ACTL6A/BAF53A and PHF10/BAF45A, are exchanged for homologous alternative ACTL6B/BAF53B and DPF1/BAF45B or DPF3/BAF45C subunits in neuron-specific complexes (nBAF). The npBAF complex is essential for the self-renewal/proliferative capacity of the multipotent neural stem cells. The nBAF complex along with CREST plays a role regulating the activity of genes essential for dendrite growth. The polypeptide is SWI/SNF complex subunit SMARCC1 (Smarcc1) (Mus musculus (Mouse)).